The primary structure comprises 430 residues: Flavin-dependent monooxygenase eupH (430 aa).

FAD-binding positions include 11-14, 33-34, Gln-43, Arg-107, Tyr-282, and Asp-306; these read AGIG and ER.

The protein belongs to the aromatic-ring hydroxylase family. The cofactor is FAD.

Its pathway is secondary metabolite biosynthesis; terpenoid biosynthesis. In terms of biological role, flavin-dependent monooxygenase; part of the gene cluster that mediates the biosynthesis of eupenifeldin, a bistropolone meroterpenoid that acts as an antitumor agent. The first step of eupenifeldin biosynthesis is the biosynthesis of 3-methylorcinaldehyde performed by the non-reducing polyketide synthase eupA. Oxidative dearomatization of 3-methylorcinaldehyde likely catalyzed by the FAD-dependent monooxygenase eupB is followed by oxidative ring expansion by the 2-oxoglutarate-dependent dioxygenase eupC to provide the first tropolone metabolite, tropolone stipitaldehyde. In parallel, generation of sesquiterpene alpha-humulene from farnesylpyrophosphate (FPP) is catalyzed by the terpene cyclase eupE. The cytochrome P450 monooxygenase eupD then hydroxylates humulene to humulenol. The putative Diels-Alderase eupF probably catalyzes the formation of the tropolone-humulene skeleton by linking humulenol and the polyketide moiety. The short-chain dehydrogenase/reductase eupG and the flavin-dependent monooxygenase eupH are also essential for eupenifeldin biosynthesis and are likely the additional decorating enzymes of the tropolone-humulene skeleton to produce final eupenifeldin or derivatives. This is Flavin-dependent monooxygenase eupH from Phoma sp.